The primary structure comprises 156 residues: Nuclear cap-binding protein subunit 2 (156 aa).

S2 is subject to N-acetylserine. Residues S13 and S18 each carry the phosphoserine modification. Residues Y20, Y43, 112-116 (RTDWD), 123-127 (RQYGR), and 133-134 (QV) contribute to the mRNA site. The RRM domain occupies 40-118 (CTLYVGNLSF…RIIRTDWDAG (79 aa)). Residues 124-156 (QYGRGRSGGQVRDEYREDYDAGRGGYGKLAQKQ) form a disordered region. The segment covering 134-144 (VRDEYREDYDA) has biased composition (basic and acidic residues). The residue at position 146 (R146) is an Omega-N-methylarginine.

It belongs to the RRM NCBP2 family. As to quaternary structure, component of the nuclear cap-binding complex (CBC), a heterodimer composed of NCBP1/CBP80 and NCBP2/CBP20 that interacts with m7GpppG-capped RNA. Found in a U snRNA export complex with PHAX/RNUXA, NCBP1/CBP80, NCBP2/CBP20, RAN, XPO1 and m7G-capped RNA. Interacts with PHAX/RNUXA, EIF4G1, HNRNPF, HNRNPH1 and ALYREF/THOC4/ALY. Interacts with SRRT/ARS2 and KPNA3.

It localises to the nucleus. The protein localises to the cytoplasm. Component of the cap-binding complex (CBC), which binds co-transcriptionally to the 5' cap of pre-mRNAs and is involved in various processes such as pre-mRNA splicing, translation regulation, nonsense-mediated mRNA decay, RNA-mediated gene silencing (RNAi) by microRNAs (miRNAs) and mRNA export. The CBC complex is involved in mRNA export from the nucleus via its interaction with ALYREF/THOC4/ALY, leading to the recruitment of the mRNA export machinery to the 5' end of mRNA and to mRNA export in a 5' to 3' direction through the nuclear pore. The CBC complex is also involved in mediating U snRNA and intronless mRNAs export from the nucleus. The CBC complex is essential for a pioneer round of mRNA translation, before steady state translation when the CBC complex is replaced by cytoplasmic cap-binding protein eIF4E. The pioneer round of mRNA translation mediated by the CBC complex plays a central role in nonsense-mediated mRNA decay (NMD), NMD only taking place in mRNAs bound to the CBC complex, but not on eIF4E-bound mRNAs. The CBC complex enhances NMD in mRNAs containing at least one exon-junction complex (EJC) via its interaction with UPF1, promoting the interaction between UPF1 and UPF2. The CBC complex is also involved in 'failsafe' NMD, which is independent of the EJC complex, while it does not participate in Staufen-mediated mRNA decay (SMD). During cell proliferation, the CBC complex is also involved in microRNAs (miRNAs) biogenesis via its interaction with SRRT/ARS2, thereby being required for miRNA-mediated RNA interference. The CBC complex also acts as a negative regulator of PARN, thereby acting as an inhibitor of mRNA deadenylation. In the CBC complex, NCBP2/CBP20 recognizes and binds capped RNAs (m7GpppG-capped RNA) but requires NCBP1/CBP80 to stabilize the movement of its N-terminal loop and lock the CBC into a high affinity cap-binding state with the cap structure. The conventional cap-binding complex with NCBP2 binds both small nuclear RNA (snRNA) and messenger (mRNA) and is involved in their export from the nucleus. The protein is Nuclear cap-binding protein subunit 2 (Ncbp2) of Mus musculus (Mouse).